Here is a 420-residue protein sequence, read N- to C-terminus: Ribosome biogenesis protein WDR12 homolog (420 aa).

The tract at residues 10-92 is ubiquitin-like (UBL) domain; the sequence is VQVHLKTKQE…EDAIEIEYVE (83 aa). WD repeat units lie at residues 104 to 142, 143 to 185, 192 to 231, 250 to 288, 290 to 329, 335 to 375, and 379 to 417; these read LHDD…LTIS, GHTA…NSVE, GHER…AVEG, GHRE…IKTE, STNK…GSVV, GHNA…APLY, and GHGE…ADDA.

Belongs to the WD repeat WDR12/YTM1 family.

The protein localises to the nucleus. It is found in the nucleolus. Its subcellular location is the nucleoplasm. Functionally, required for maturation of ribosomal RNAs and formation of the large ribosomal subunit. The protein is Ribosome biogenesis protein WDR12 homolog of Drosophila yakuba (Fruit fly).